We begin with the raw amino-acid sequence, 267 residues long: Lectin SfL-1 (267 aa).

4 repeat units span residues 1 to 67 (GRYT…RRGD), 68 to 135 (SNNY…QSGG), 136 to 202 (DSYN…STGG), and 203 to 267 (SNYK…GTAI). The tract at residues 1–267 (GRYTVQNQWG…GPIGFKGTAI (267 aa)) is 4 X approximate tandem repeats.

Monomer.

Its function is as follows. Lectin specific for high mannose N-glycans, recognizes the branched moiety of these glycans. Does not recognize other types of N-glycans or monosaccharides. The sequence is that of Lectin SfL-1 from Solieria filiformis (Red alga).